Reading from the N-terminus, the 395-residue chain is S-adenosylmethionine synthase (395 aa).

Residue His-15 participates in ATP binding. Residue Asp-17 coordinates Mg(2+). Glu-43 serves as a coordination point for K(+). Gln-99 serves as a coordination point for L-methionine. Residues 99 to 109 (QSPDIAMGVNE) are flexible loop. ATP-binding positions include 174–176 (DGK), 240–241 (RF), Asp-249, 255–256 (RK), Ala-272, and Lys-276. Asp-249 provides a ligand contact to L-methionine. L-methionine is bound at residue Lys-280.

The protein belongs to the AdoMet synthase family. As to quaternary structure, homotetramer; dimer of dimers. Mg(2+) is required as a cofactor. It depends on K(+) as a cofactor.

It is found in the cytoplasm. It catalyses the reaction L-methionine + ATP + H2O = S-adenosyl-L-methionine + phosphate + diphosphate. Its pathway is amino-acid biosynthesis; S-adenosyl-L-methionine biosynthesis; S-adenosyl-L-methionine from L-methionine: step 1/1. Catalyzes the formation of S-adenosylmethionine (AdoMet) from methionine and ATP. The overall synthetic reaction is composed of two sequential steps, AdoMet formation and the subsequent tripolyphosphate hydrolysis which occurs prior to release of AdoMet from the enzyme. In Moorella thermoacetica (strain ATCC 39073 / JCM 9320), this protein is S-adenosylmethionine synthase.